The primary structure comprises 143 residues: Nucleoside diphosphate kinase (143 aa).

ATP-binding residues include Lys11, Phe59, Arg87, Thr93, Arg104, and Asn114. His117 functions as the Pros-phosphohistidine intermediate in the catalytic mechanism.

Belongs to the NDK family. As to quaternary structure, homotetramer. Mg(2+) is required as a cofactor.

It localises to the cytoplasm. The enzyme catalyses a 2'-deoxyribonucleoside 5'-diphosphate + ATP = a 2'-deoxyribonucleoside 5'-triphosphate + ADP. The catalysed reaction is a ribonucleoside 5'-diphosphate + ATP = a ribonucleoside 5'-triphosphate + ADP. Functionally, major role in the synthesis of nucleoside triphosphates other than ATP. The ATP gamma phosphate is transferred to the NDP beta phosphate via a ping-pong mechanism, using a phosphorylated active-site intermediate. In Citrobacter koseri (strain ATCC BAA-895 / CDC 4225-83 / SGSC4696), this protein is Nucleoside diphosphate kinase.